We begin with the raw amino-acid sequence, 516 residues long: 2-isopropylmalate synthase (516 aa).

Positions 5-268 constitute a Pyruvate carboxyltransferase domain; the sequence is LIIFDTTLRD…DLGIDTTQIV (264 aa). Aspartate 14, histidine 202, histidine 204, and asparagine 239 together coordinate Mn(2+). Positions 395 to 516 are regulatory domain; that stretch reads KFVSLSQHSE…DKLNPQRADI (122 aa).

It belongs to the alpha-IPM synthase/homocitrate synthase family. LeuA type 1 subfamily. Homodimer. Mn(2+) is required as a cofactor.

It is found in the cytoplasm. It carries out the reaction 3-methyl-2-oxobutanoate + acetyl-CoA + H2O = (2S)-2-isopropylmalate + CoA + H(+). It participates in amino-acid biosynthesis; L-leucine biosynthesis; L-leucine from 3-methyl-2-oxobutanoate: step 1/4. Its function is as follows. Catalyzes the condensation of the acetyl group of acetyl-CoA with 3-methyl-2-oxobutanoate (2-ketoisovalerate) to form 3-carboxy-3-hydroxy-4-methylpentanoate (2-isopropylmalate). The chain is 2-isopropylmalate synthase from Paraburkholderia phymatum (strain DSM 17167 / CIP 108236 / LMG 21445 / STM815) (Burkholderia phymatum).